The primary structure comprises 72 residues: Translation initiation factor IF-1 (72 aa).

Residues 1-72 (MSKDDVIEMQ…TRGRITWRAK (72 aa)) form the S1-like domain.

The protein belongs to the IF-1 family. Component of the 30S ribosomal translation pre-initiation complex which assembles on the 30S ribosome in the order IF-2 and IF-3, IF-1 and N-formylmethionyl-tRNA(fMet); mRNA recruitment can occur at any time during PIC assembly.

Its subcellular location is the cytoplasm. One of the essential components for the initiation of protein synthesis. Stabilizes the binding of IF-2 and IF-3 on the 30S subunit to which N-formylmethionyl-tRNA(fMet) subsequently binds. Helps modulate mRNA selection, yielding the 30S pre-initiation complex (PIC). Upon addition of the 50S ribosomal subunit IF-1, IF-2 and IF-3 are released leaving the mature 70S translation initiation complex. This Clostridium botulinum (strain ATCC 19397 / Type A) protein is Translation initiation factor IF-1.